Consider the following 161-residue polypeptide: Arginine repressor (161 aa).

Belongs to the ArgR family.

The protein localises to the cytoplasm. The protein operates within amino-acid biosynthesis; L-arginine biosynthesis [regulation]. Its function is as follows. Regulates arginine biosynthesis genes. This Corynebacterium aurimucosum (strain ATCC 700975 / DSM 44827 / CIP 107346 / CN-1) (Corynebacterium nigricans) protein is Arginine repressor.